A 366-amino-acid polypeptide reads, in one-letter code: Box C/D snoRNA protein 1 (366 aa).

Zn(2+) is bound by residues Cys-5, Cys-8, Cys-17, Cys-20, Cys-25, Cys-29, His-33, and Cys-39. The HIT-type zinc finger occupies 5 to 39 (CGVCGIKEFKYKCPRCLVQTCSLECSKKHKTRDNC). A disordered region spans residues 318-366 (DNAREEEDAEEDSQPTEEPVQKETQDASDSDSDSDDDYNPGLSMDFLTA). 2 stretches are compositionally biased toward acidic residues: residues 321 to 332 (REEEDAEEDSQP) and 343 to 355 (DASDSDSDSDDDY). At Ser-330 the chain carries Phosphoserine.

This sequence belongs to the BCD1 family.

Its subcellular location is the nucleus. Required for box C/D snoRNAs accumulation involved in snoRNA processing, snoRNA transport to the nucleolus and ribosome biogenesis. The polypeptide is Box C/D snoRNA protein 1 (BCD1) (Saccharomyces cerevisiae (strain ATCC 204508 / S288c) (Baker's yeast)).